Reading from the N-terminus, the 827-residue chain is SH3-containing GRB2-like protein 3-interacting protein 1 (827 aa).

Disordered regions lie at residues 1-116 (MMEG…SHKK), 143-199 (IGNI…ALAP), and 223-278 (IWGS…QAAT). Basic and acidic residues-rich tracts occupy residues 16 to 32 (RKKEKDTDSTGSPDRDG) and 40 to 53 (LPYHSKAECAREGG). Ser-78, Ser-104, Ser-105, Ser-107, Ser-149, Ser-151, Ser-156, and Ser-169 each carry phosphoserine. A phosphothreonine mark is found at Thr-180 and Thr-182. Ser-236 is modified (phosphoserine). The span at 245 to 260 (TGTPPPLPPKTVPATP) shows a compositional bias: pro residues. A phosphothreonine mark is found at Thr-247 and Thr-259. Residues Ser-265, Ser-287, Ser-289, Ser-300, Ser-316, and Ser-319 each carry the phosphoserine modification. Polar residues predominate over residues 265-276 (SPLTVATGNDQA). Positions 315–505 (FSDASPEHVT…IAPLARAEST (191 aa)) are disordered. Basic and acidic residues predominate over residues 319–333 (SPEHVTPELTPREKV). Thr-324, Thr-328, and Thr-335 each carry phosphothreonine. Residues 335-345 (TPPAASDIPAD) are compositionally biased toward low complexity. Over residues 346 to 369 (SPTPGPPGPPGSAGPPGPPGPRNV) the composition is skewed to pro residues. Ser-371 is modified (phosphoserine). A compositionally biased stretch (basic and acidic residues) spans 377 to 392 (EVQKKVAEQTFIKDDY). Ser-398 carries the phosphoserine modification. Thr-409 is modified (phosphothreonine). A compositionally biased stretch (low complexity) spans 436–455 (ASGASSPARPATPLVPCSCS). Residues 456-474 (TPPPPPPRPPSRPKLPPGK) show a composition bias toward pro residues. The segment covering 481–491 (SRPFSPPIHSS) has biased composition (low complexity). A Phosphoserine modification is found at Ser-485. One can recognise an MHD domain in the interval 558-826 (TLPVAAAFTE…RFAAGKYLAD (269 aa)). 4 interaction with DPF motifs-containing proteins regions span residues 560-566 (PVAAAFT), 592-594 (SFP), 666-669 (TYYN), and 812-817 (SLIKKR). The tract at residues 648-827 (MPNLMTHLKK…FAAGKYLADN (180 aa)) is necessary and sufficient to mediate interaction with CANX.

Interacts with proteins essential or regulating the formation of functional clathrin-coated pits. Interacts with CANX. Interacts with AP2A1. Interacts with EPS15. Interacts with SH3GL3. Interacts with AMPH. Interacts with ITSN1 (via SH3 domains). Interacts with and REPS1. Specifically expressed in brain. Also detected at lower levels in spleen and adipose tissue.

It is found in the membrane. It localises to the clathrin-coated pit. In terms of biological role, may function in clathrin-mediated endocytosis. Has both a membrane binding/tubulating activity and the ability to recruit proteins essential to the formation of functional clathrin-coated pits. Has a preference for membranes enriched in phosphatidylserine and phosphoinositides and is required for the endocytosis of the transferrin receptor. May also bind tubulin. May play a role in the regulation of energy homeostasis. The protein is SH3-containing GRB2-like protein 3-interacting protein 1 (SGIP1) of Psammomys obesus (Fat sand rat).